Here is a 977-residue protein sequence, read N- to C-terminus: Mast/stem cell growth factor receptor Kit (977 aa).

Positions 1 to 25 (MRGARGAWDFLFVLLLLLLVQTGSS) are cleaved as a signal peptide. Residues 26 to 525 (QPSVSPGELS…QIHAHTLFTP (500 aa)) lie on the Extracellular side of the membrane. Ig-like C2-type domains follow at residues 27 to 112 (PSVS…VFVR), 121 to 205 (DLPL…LKVR), 212 to 309 (PVVS…LEVV), 318 to 411 (PMMN…VYVN), and 414 to 508 (PEIL…FNFA). Cys58 and Cys97 are joined by a disulfide. N-linked (GlcNAc...) asparagine glycans are attached at residues Asn94, Asn130, and Asn145. 3 cysteine pairs are disulfide-bonded: Cys136–Cys186, Cys151–Cys183, and Cys233–Cys291. Residues Asn284, Asn294, Asn301, Asn321, Asn353, Asn368, Asn401, Asn464, and Asn487 are each glycosylated (N-linked (GlcNAc...) asparagine). Cys429 and Cys492 are joined by a disulfide. Residues 526–546 (LLIGFVIAAGLMCIFVMILTY) traverse the membrane as a helical segment. Topologically, residues 547 to 977 (KYLQKPMYEV…TQPLLVHEDV (431 aa)) are cytoplasmic. 2 positions are modified to phosphotyrosine: Tyr548 and Tyr554. Position 569 (Tyr569) interacts with Mg(2+). A phosphotyrosine; by autocatalysis mark is found at Tyr569 and Tyr571. The tract at residues 569–571 (YVY) is important for interaction with phosphotyrosine-binding proteins. The Protein kinase domain occupies 590–938 (LSFGKTLGAG…ISESTNHIYS (349 aa)). ATP is bound by residues 597–604 (GAGAFGKV), Lys624, and 672–678 (EYCCYGD). Phosphotyrosine; by autocatalysis is present on residues Tyr704 and Tyr722. Tyr731 carries the phosphotyrosine modification. Phosphoserine; by PKC/PRKCA occurs at positions 742 and 747. The active-site Proton acceptor is Asp793. Arg797 is an ATP binding site. Residues Asn798 and Asp811 each coordinate Mg(2+). At Ser822 the chain carries Phosphoserine. The residue at position 824 (Tyr824) is a Phosphotyrosine; by autocatalysis. Phosphoserine is present on Ser892. Tyr901 carries the phosphotyrosine modification. Tyr937 is subject to Phosphotyrosine; by autocatalysis. Phosphoserine is present on Ser960.

This sequence belongs to the protein kinase superfamily. Tyr protein kinase family. CSF-1/PDGF receptor subfamily. As to quaternary structure, monomer in the absence of bound KITLG/SCF. Homodimer in the presence of bound KITLG/SCF, forming a heterotetramer with two KITLG/SCF molecules. Interacts (via phosphorylated tyrosine residues) with the adapter proteins GRB2 and GRB7 (via SH2 domain), and SH2B2/APS. Interacts (via C-terminus) with MPDZ (via the tenth PDZ domain). Interacts (via phosphorylated tyrosine residues) with PIK3R1 and PIK3CD. Interacts (via phosphorylated tyrosine) with CRK (isoform Crk-II), FYN, SHC1 and MATK/CHK (via SH2 domain). Interacts with LYN and FES/FPS. Interacts (via phosphorylated tyrosine residues) with the protein phosphatases PTPN6/SHP-1 (via SH2 domain), PTPN11/SHP-2 (via SH2 domain) and PTPRU. Interacts with PLCG1. Interacts with DOK1 and TEC. Interacts with IL1RAP (independent of stimulation with KITLG/SCF). A mast cell-specific KITLG/SCF-induced interleukin-33 signaling complex contains IL1RL1, IL1RAP, KIT and MYD88. Post-translationally, ubiquitinated by SOCS6. KIT is rapidly ubiquitinated after autophosphorylation induced by KITLG/SCF binding, leading to internalization and degradation. In terms of processing, autophosphorylated on tyrosine residues. KITLG/SCF binding promotes autophosphorylation. Phosphorylated tyrosine residues are important for interaction with specific binding partners.

The protein resides in the cell membrane. It catalyses the reaction L-tyrosyl-[protein] + ATP = O-phospho-L-tyrosyl-[protein] + ADP + H(+). Present in an inactive conformation in the absence of bound ligand. KITLG/SCF binding leads to dimerization and activation by autophosphorylation on tyrosine residues. Activity is down-regulated by PRKCA-mediated phosphorylation on serine residues. In terms of biological role, tyrosine-protein kinase that acts as a cell-surface receptor for the cytokine KITLG/SCF and plays an essential role in the regulation of cell survival and proliferation, hematopoiesis, stem cell maintenance, gametogenesis, mast cell development, migration and function, and in melanogenesis. In response to KITLG/SCF binding, KIT can activate several signaling pathways. Phosphorylates PIK3R1, PLCG1, SH2B2/APS and CBL. Activates the AKT1 signaling pathway by phosphorylation of PIK3R1, the regulatory subunit of phosphatidylinositol 3-kinase. Activated KIT also transmits signals via GRB2 and activation of RAS, RAF1 and the MAP kinases MAPK1/ERK2 and/or MAPK3/ERK1. Promotes activation of STAT family members STAT1, STAT3, STAT5A and STAT5B. Activation of PLCG1 leads to the production of the cellular signaling molecules diacylglycerol and inositol 1,4,5-trisphosphate. KIT signaling is modulated by protein phosphatases, and by rapid internalization and degradation of the receptor. Activated KIT promotes phosphorylation of the protein phosphatases PTPN6/SHP-1 and PTPRU, and of the transcription factors STAT1, STAT3, STAT5A and STAT5B. Promotes phosphorylation of PIK3R1, CBL, CRK (isoform Crk-II), LYN, MAPK1/ERK2 and/or MAPK3/ERK1, PLCG1, SRC and SHC1. This Bos taurus (Bovine) protein is Mast/stem cell growth factor receptor Kit (KIT).